Consider the following 406-residue polypeptide: Tryptophan synthase beta chain (406 aa).

Lys-97 carries the N6-(pyridoxal phosphate)lysine modification.

This sequence belongs to the TrpB family. Tetramer of two alpha and two beta chains. The cofactor is pyridoxal 5'-phosphate.

It carries out the reaction (1S,2R)-1-C-(indol-3-yl)glycerol 3-phosphate + L-serine = D-glyceraldehyde 3-phosphate + L-tryptophan + H2O. Its pathway is amino-acid biosynthesis; L-tryptophan biosynthesis; L-tryptophan from chorismate: step 5/5. The beta subunit is responsible for the synthesis of L-tryptophan from indole and L-serine. This is Tryptophan synthase beta chain from Lacticaseibacillus casei (strain BL23) (Lactobacillus casei).